We begin with the raw amino-acid sequence, 526 residues long: D-arabinono-1,4-lactone oxidase (526 aa).

The FAD-binding PCMH-type domain maps to 19 to 193 (YSAKPERYFQ…VSATIRVVPG (175 aa)). H56 carries the pros-8alpha-FAD histidine modification.

It belongs to the oxygen-dependent FAD-linked oxidoreductase family. In terms of assembly, monomer. The cofactor is FAD. The N-terminus is blocked.

It localises to the mitochondrion membrane. The enzyme catalyses D-arabinono-1,4-lactone + O2 = dehydro-D-arabinono-1,4-lactone + H2O2 + H(+). It participates in cofactor biosynthesis; D-erythroascorbate biosynthesis; dehydro-D-arabinono-1,4-lactone from D-arabinose: step 2/2. In terms of biological role, can oxidize L-gulono-1,4-lactone as well as D-arabinono-1,4-lactone and L-galactono-1,4-lactone. The sequence is that of D-arabinono-1,4-lactone oxidase (ALO1) from Saccharomyces cerevisiae (strain ATCC 204508 / S288c) (Baker's yeast).